A 407-amino-acid chain; its full sequence is uncharacterized protein (407 aa).

The next 12 membrane-spanning stretches (helical) occupy residues 22 to 42 (IVSV…PLAV), 51 to 71 (LGFS…ATLA), 101 to 121 (ALLL…VLLV), 126 to 146 (VLGI…IGRV), 154 to 174 (VISW…PVGV), 179 to 199 (ALIP…GYYL), 227 to 247 (GLGL…ITLY), 258 to 278 (LSLT…ANTI), 286 to 306 (VAIV…LAPV), 309 to 329 (VALV…PALG), 347 to 367 (AYSV…GYVA), and 369 to 389 (AFGY…GVAL).

It belongs to the major facilitator superfamily. YhhS family.

The protein resides in the cell inner membrane. This is an uncharacterized protein from Burkholderia pseudomallei (strain 1106a).